The chain runs to 587 residues: Methylcrotonoyl-CoA carboxylase beta chain, mitochondrial (587 aa).

The N-terminal 26 residues, 1–26 (MLRILGRRVVSASKELTSIQQWRIRP), are a transit peptide targeting the mitochondrion. Residues 68–324 (MEGILSELRS…AAKQGMEGTF (257 aa)) enclose the CoA carboxyltransferase N-terminal domain. The segment at 68–579 (MEGILSELRS…SAALNRPLED (512 aa)) is carboxyltransferase. One can recognise a CoA carboxyltransferase C-terminal domain in the interval 333–579 (EPLYDINELR…SAALNRPLED (247 aa)). The segment at 367–396 (EFDEFKKQYGTTLVTGFARIYGQTVGIIGN) is acyl-CoA binding.

The protein belongs to the AccD/PCCB family. As to quaternary structure, probably a heterodimer composed of biotin-containing alpha subunits and beta subunits. As to expression, in roots, cotyledons, leaves, flowers, ovaries, siliques and embryos.

Its subcellular location is the mitochondrion matrix. It carries out the reaction 3-methylbut-2-enoyl-CoA + hydrogencarbonate + ATP = 3-methyl-(2E)-glutaconyl-CoA + ADP + phosphate + H(+). It functions in the pathway amino-acid degradation; L-leucine degradation; (S)-3-hydroxy-3-methylglutaryl-CoA from 3-isovaleryl-CoA: step 2/3. In terms of biological role, carboxyltransferase subunit of the 3-methylcrotonyl-CoA carboxylase, an enzyme that catalyzes the conversion of 3-methylcrotonyl-CoA to 3-methylglutaconyl-CoA, a critical step for leucine and isovaleric acid catabolism. This Arabidopsis thaliana (Mouse-ear cress) protein is Methylcrotonoyl-CoA carboxylase beta chain, mitochondrial (MCCB).